The primary structure comprises 295 residues: Nucleotide-binding protein Lxx11490 (295 aa).

ATP is bound at residue 19-26 (GMSGAGRS). 70–73 (DVRG) serves as a coordination point for GTP.

Belongs to the RapZ-like family.

Its function is as follows. Displays ATPase and GTPase activities. The protein is Nucleotide-binding protein Lxx11490 of Leifsonia xyli subsp. xyli (strain CTCB07).